A 469-amino-acid chain; its full sequence is Dihydroorotate dehydrogenase (quinone), mitochondrial (469 aa).

Residues 1–37 (MSSSAAALAWRRSLRDALLRGSAWRGAPAANSAAARL) constitute a mitochondrion transit peptide. A helical membrane pass occupies residues 62–82 (LLTGAMIGLAIAGGAYVSTAD). Residues 150-154 (AGFDK) and Ser-174 each bind FMN. A substrate-binding site is contributed by Lys-154. Residue 199 to 203 (NRCGF) coordinates substrate. Residues 219-247 (HGKRKMEETSSSTSPTTSDVKQGGKAGPG) are disordered. The segment covering 227–236 (TSSSTSPTTS) has biased composition (low complexity). FMN-binding residues include Asn-252 and Asn-283. 283–288 (NVSSPN) contacts substrate. Ser-286 (nucleophile) is an active-site residue. FMN-binding residues include Lys-328 and Ser-356. Substrate is bound at residue 357 to 358 (NT). Residues Gly-380, Gly-409, and 430-431 (YT) each bind FMN.

This sequence belongs to the dihydroorotate dehydrogenase family. Type 2 subfamily. FMN is required as a cofactor.

The protein resides in the mitochondrion inner membrane. The enzyme catalyses (S)-dihydroorotate + a quinone = orotate + a quinol. It functions in the pathway pyrimidine metabolism; UMP biosynthesis via de novo pathway; orotate from (S)-dihydroorotate (quinone route): step 1/1. In terms of biological role, catalyzes the conversion of dihydroorotate to orotate with quinone as electron acceptor. The polypeptide is Dihydroorotate dehydrogenase (quinone), mitochondrial (PYRD) (Oryza sativa subsp. japonica (Rice)).